A 413-amino-acid polypeptide reads, in one-letter code: Serine hydroxymethyltransferase (413 aa).

(6S)-5,6,7,8-tetrahydrofolate is bound by residues Leu-117 and 121 to 123; that span reads GHL. At Lys-226 the chain carries N6-(pyridoxal phosphate)lysine. Residues Glu-239 and 349–351 each bind (6S)-5,6,7,8-tetrahydrofolate; that span reads SPF.

It belongs to the SHMT family. In terms of assembly, homodimer. Pyridoxal 5'-phosphate is required as a cofactor.

The protein localises to the cytoplasm. The enzyme catalyses (6R)-5,10-methylene-5,6,7,8-tetrahydrofolate + glycine + H2O = (6S)-5,6,7,8-tetrahydrofolate + L-serine. It functions in the pathway one-carbon metabolism; tetrahydrofolate interconversion. It participates in amino-acid biosynthesis; glycine biosynthesis; glycine from L-serine: step 1/1. Functionally, catalyzes the reversible interconversion of serine and glycine with tetrahydrofolate (THF) serving as the one-carbon carrier. This reaction serves as the major source of one-carbon groups required for the biosynthesis of purines, thymidylate, methionine, and other important biomolecules. Also exhibits THF-independent aldolase activity toward beta-hydroxyamino acids, producing glycine and aldehydes, via a retro-aldol mechanism. The chain is Serine hydroxymethyltransferase from Bacillus cytotoxicus (strain DSM 22905 / CIP 110041 / 391-98 / NVH 391-98).